Consider the following 101-residue polypeptide: Protein S100-A7 (101 aa).

Ser2 bears the N-acetylserine mark. EF-hand domains are found at residues 8–42 (QAITDLINLFHKYSGSDDTIEKEDLLRLMKDNFPN) and 50–85 (RGRDYLSNIFEKQDKNKDRKIDFSEFLSLLADIATD). Zn(2+) contacts are provided by His18 and Asp25. The Ca(2+) site is built by Asp63, Asn65, Asp67, Lys69, and Glu74. Residues His87 and His91 each coordinate Zn(2+).

Belongs to the S-100 family. As to quaternary structure, interacts with RANBP9.

Its subcellular location is the cytoplasm. It is found in the secreted. The chain is Protein S100-A7 (S100A7) from Bos taurus (Bovine).